We begin with the raw amino-acid sequence, 341 residues long: NADH-quinone oxidoreductase subunit H 2 (341 aa).

8 helical membrane-spanning segments follow: residues 13–33 (IIVI…IAYI), 82–102 (GVFL…WAVI), 115–135 (VGVL…IMAG), 161–181 (IGFV…TAIV), 190–210 (MLGW…VSAL), 248–268 (YVAI…GWLP), 277–297 (WVPG…LFAM), and 317–337 (VFLP…QFAG).

It belongs to the complex I subunit 1 family. In terms of assembly, NDH-1 is composed of 14 different subunits. Subunits NuoA, H, J, K, L, M, N constitute the membrane sector of the complex.

It is found in the cell inner membrane. It carries out the reaction a quinone + NADH + 5 H(+)(in) = a quinol + NAD(+) + 4 H(+)(out). Its function is as follows. NDH-1 shuttles electrons from NADH, via FMN and iron-sulfur (Fe-S) centers, to quinones in the respiratory chain. The immediate electron acceptor for the enzyme in this species is believed to be ubiquinone. Couples the redox reaction to proton translocation (for every two electrons transferred, four hydrogen ions are translocated across the cytoplasmic membrane), and thus conserves the redox energy in a proton gradient. This subunit may bind ubiquinone. The protein is NADH-quinone oxidoreductase subunit H 2 of Rhodopseudomonas palustris (strain BisB5).